The primary structure comprises 392 residues: 1-deoxy-D-xylulose 5-phosphate reductoisomerase (392 aa).

7 residues coordinate NADPH: Thr-14, Gly-15, Ser-16, Ile-17, Gly-40, Gln-43, and Asn-126. A 1-deoxy-D-xylulose 5-phosphate-binding site is contributed by Lys-127. Glu-128 contacts NADPH. Asp-150 is a binding site for Mn(2+). 1-deoxy-D-xylulose 5-phosphate contacts are provided by Ser-151, Glu-152, Ser-176, and His-199. Mn(2+) is bound at residue Glu-152. Gly-205 serves as a coordination point for NADPH. 1-deoxy-D-xylulose 5-phosphate contacts are provided by Ser-212, Asn-217, Lys-218, and Glu-221. Glu-221 contributes to the Mn(2+) binding site.

Belongs to the DXR family. Requires Mg(2+) as cofactor. Mn(2+) is required as a cofactor.

It carries out the reaction 2-C-methyl-D-erythritol 4-phosphate + NADP(+) = 1-deoxy-D-xylulose 5-phosphate + NADPH + H(+). It participates in isoprenoid biosynthesis; isopentenyl diphosphate biosynthesis via DXP pathway; isopentenyl diphosphate from 1-deoxy-D-xylulose 5-phosphate: step 1/6. Catalyzes the NADPH-dependent rearrangement and reduction of 1-deoxy-D-xylulose-5-phosphate (DXP) to 2-C-methyl-D-erythritol 4-phosphate (MEP). This Corynebacterium glutamicum (strain ATCC 13032 / DSM 20300 / JCM 1318 / BCRC 11384 / CCUG 27702 / LMG 3730 / NBRC 12168 / NCIMB 10025 / NRRL B-2784 / 534) protein is 1-deoxy-D-xylulose 5-phosphate reductoisomerase.